The following is a 146-amino-acid chain: Acidic phospholipase A2 S13-69J (146 aa).

Residues 1–19 form the signal peptide; it reads MYPAHLLVLLAVCVSLLGA. Positions 20 to 27 are excised as a propeptide; that stretch reads ASIPPQPL. Disulfide bonds link Cys38-Cys98, Cys54-Cys145, Cys56-Cys72, Cys71-Cys126, Cys78-Cys119, Cys87-Cys112, and Cys105-Cys117. Ca(2+) contacts are provided by Tyr55, Gly57, and Gly59. The active site involves His75. Residue Asp76 coordinates Ca(2+). Asp120 is a catalytic residue.

Belongs to the phospholipase A2 family. Group I subfamily. D49 sub-subfamily. It depends on Ca(2+) as a cofactor. Expressed by the venom gland.

The protein resides in the secreted. The enzyme catalyses a 1,2-diacyl-sn-glycero-3-phosphocholine + H2O = a 1-acyl-sn-glycero-3-phosphocholine + a fatty acid + H(+). Its function is as follows. Snake venom phospholipase A2 (PLA2) that inhibits collagen-induced platelet aggregation. PLA2 catalyzes the calcium-dependent hydrolysis of the 2-acyl groups in 3-sn-phosphoglycerides. This Austrelaps superbus (Lowland copperhead snake) protein is Acidic phospholipase A2 S13-69J.